A 317-amino-acid polypeptide reads, in one-letter code: Transaldolase (317 aa).

K132 acts as the Schiff-base intermediate with substrate in catalysis.

This sequence belongs to the transaldolase family. Type 1 subfamily. Homodimer.

The protein resides in the cytoplasm. The catalysed reaction is D-sedoheptulose 7-phosphate + D-glyceraldehyde 3-phosphate = D-erythrose 4-phosphate + beta-D-fructose 6-phosphate. It functions in the pathway carbohydrate degradation; pentose phosphate pathway; D-glyceraldehyde 3-phosphate and beta-D-fructose 6-phosphate from D-ribose 5-phosphate and D-xylulose 5-phosphate (non-oxidative stage): step 2/3. In terms of biological role, transaldolase is important for the balance of metabolites in the pentose-phosphate pathway. The chain is Transaldolase from Haemophilus influenzae (strain PittGG).